A 225-amino-acid polypeptide reads, in one-letter code: Octanoyltransferase (225 aa).

One can recognise a BPL/LPL catalytic domain in the interval 44-219 (RETPDEIWLL…NFIAQLTHRI (176 aa)). Substrate is bound by residues 83–90 (RGGQITYH), 150–152 (SLG), and 163–165 (GIA). Cys181 serves as the catalytic Acyl-thioester intermediate.

Belongs to the LipB family.

Its subcellular location is the cytoplasm. The enzyme catalyses octanoyl-[ACP] + L-lysyl-[protein] = N(6)-octanoyl-L-lysyl-[protein] + holo-[ACP] + H(+). It participates in protein modification; protein lipoylation via endogenous pathway; protein N(6)-(lipoyl)lysine from octanoyl-[acyl-carrier-protein]: step 1/2. Its function is as follows. Catalyzes the transfer of endogenously produced octanoic acid from octanoyl-acyl-carrier-protein onto the lipoyl domains of lipoate-dependent enzymes. Lipoyl-ACP can also act as a substrate although octanoyl-ACP is likely to be the physiological substrate. The chain is Octanoyltransferase from Nitrosomonas eutropha (strain DSM 101675 / C91 / Nm57).